The following is a 194-amino-acid chain: Protein phosphatase 1 regulatory subunit 1B (194 aa).

Methionine 1 is modified (N-acetylmethionine). A disordered region spans residues 1 to 194; sequence MDPKDRKKIQ…GEEPQHPSPP (194 aa). At threonine 34 the chain carries Phosphothreonine; by PKA. Basic and acidic residues predominate over residues 41–63; sequence VSEHSSPEEEASPHQRTSGEGHH. Phosphoserine is present on residues serine 45 and serine 46. The residue at position 75 (threonine 75) is a Phosphothreonine. Residues 84 to 95 are compositionally biased toward polar residues; the sequence is HLQTISNLSENQ. Serine 97 and serine 130 each carry phosphoserine. A compositionally biased stretch (acidic residues) spans 113–131; sequence QEDDEEDEDEEEDEEEDSQ. Residues 160–170 show a composition bias toward basic and acidic residues; sequence PPLDEPQRDGN. Phosphoserine is present on serine 192.

Belongs to the protein phosphatase inhibitor 1 family. Dopamine- and cyclic AMP-regulated neuronal phosphoprotein. Post-translationally, phosphorylation of Thr-34 is required for activity.

Its subcellular location is the cytoplasm. Functionally, inhibitor of protein-phosphatase 1. In Mus musculus (Mouse), this protein is Protein phosphatase 1 regulatory subunit 1B (Ppp1r1b).